Here is a 463-residue protein sequence, read N- to C-terminus: Bifunctional protein HldE (463 aa).

Residues Met-1–Thr-311 are ribokinase. An ATP-binding site is contributed by Asn-191 to Glu-194. Asp-260 is an active-site residue. Positions Phe-334–Asp-463 are cytidylyltransferase.

The protein in the N-terminal section; belongs to the carbohydrate kinase PfkB family. It in the C-terminal section; belongs to the cytidylyltransferase family. As to quaternary structure, homodimer.

It carries out the reaction D-glycero-beta-D-manno-heptose 7-phosphate + ATP = D-glycero-beta-D-manno-heptose 1,7-bisphosphate + ADP + H(+). The catalysed reaction is D-glycero-beta-D-manno-heptose 1-phosphate + ATP + H(+) = ADP-D-glycero-beta-D-manno-heptose + diphosphate. It participates in nucleotide-sugar biosynthesis; ADP-L-glycero-beta-D-manno-heptose biosynthesis; ADP-L-glycero-beta-D-manno-heptose from D-glycero-beta-D-manno-heptose 7-phosphate: step 1/4. It functions in the pathway nucleotide-sugar biosynthesis; ADP-L-glycero-beta-D-manno-heptose biosynthesis; ADP-L-glycero-beta-D-manno-heptose from D-glycero-beta-D-manno-heptose 7-phosphate: step 3/4. Functionally, catalyzes the phosphorylation of D-glycero-D-manno-heptose 7-phosphate at the C-1 position to selectively form D-glycero-beta-D-manno-heptose-1,7-bisphosphate. Its function is as follows. Catalyzes the ADP transfer from ATP to D-glycero-beta-D-manno-heptose 1-phosphate, yielding ADP-D-glycero-beta-D-manno-heptose. The polypeptide is Bifunctional protein HldE (Helicobacter pylori (strain G27)).